The primary structure comprises 882 residues: Translation initiation factor IF-2 (882 aa).

The disordered stretch occupies residues 28-294 (GIRKSADDSV…SSLQQGFQKP (267 aa)). The span at 67 to 81 (STLNIPGTGGKSKSV) shows a compositional bias: polar residues. The span at 92 to 209 (VKRDPQEAER…RMAEENKWTD (118 aa)) shows a compositional bias: basic and acidic residues. Basic residues predominate over residues 244–258 (GRGRNAKAARPKKGN). Positions 259-272 (KHAESKADREEARA) are enriched in basic and acidic residues. A tr-type G domain is found at 381-550 (PRAPVVTIMG…LLQAEVLELK (170 aa)). The G1 stretch occupies residues 390–397 (GHVDHGKT). A GTP-binding site is contributed by 390 to 397 (GHVDHGKT). Residues 415-419 (GITQH) form a G2 region. The segment at 436–439 (DTPG) is G3. GTP is bound by residues 436-440 (DTPGH) and 490-493 (NKID). A G4 region spans residues 490–493 (NKID). Residues 526–528 (SAK) form a G5 region. K800 carries the N6-acetyllysine modification.

The protein belongs to the TRAFAC class translation factor GTPase superfamily. Classic translation factor GTPase family. IF-2 subfamily.

Its subcellular location is the cytoplasm. Functionally, one of the essential components for the initiation of protein synthesis. Protects formylmethionyl-tRNA from spontaneous hydrolysis and promotes its binding to the 30S ribosomal subunits. Also involved in the hydrolysis of GTP during the formation of the 70S ribosomal complex. In Shigella flexneri serotype 5b (strain 8401), this protein is Translation initiation factor IF-2.